Here is a 115-residue protein sequence, read N- to C-terminus: Large ribosomal subunit protein uL22 (115 aa).

The protein belongs to the universal ribosomal protein uL22 family. In terms of assembly, part of the 50S ribosomal subunit.

Its function is as follows. This protein binds specifically to 23S rRNA; its binding is stimulated by other ribosomal proteins, e.g. L4, L17, and L20. It is important during the early stages of 50S assembly. It makes multiple contacts with different domains of the 23S rRNA in the assembled 50S subunit and ribosome. In terms of biological role, the globular domain of the protein is located near the polypeptide exit tunnel on the outside of the subunit, while an extended beta-hairpin is found that lines the wall of the exit tunnel in the center of the 70S ribosome. This Streptomyces avermitilis (strain ATCC 31267 / DSM 46492 / JCM 5070 / NBRC 14893 / NCIMB 12804 / NRRL 8165 / MA-4680) protein is Large ribosomal subunit protein uL22.